The primary structure comprises 360 residues: Glutamate 5-kinase (360 aa).

An ATP-binding site is contributed by Lys7. Residues Ser47, Asp134, and Asn146 each contribute to the substrate site. Residues 166–167 and 210–216 each bind ATP; these read TD and TGGITTK. In terms of domain architecture, PUA spans 275 to 348; it reads VGQITLDEGA…LNKKENINSS (74 aa).

Belongs to the glutamate 5-kinase family.

The protein localises to the cytoplasm. The catalysed reaction is L-glutamate + ATP = L-glutamyl 5-phosphate + ADP. It participates in amino-acid biosynthesis; L-proline biosynthesis; L-glutamate 5-semialdehyde from L-glutamate: step 1/2. Its function is as follows. Catalyzes the transfer of a phosphate group to glutamate to form L-glutamate 5-phosphate. The sequence is that of Glutamate 5-kinase from Prochlorococcus marinus subsp. pastoris (strain CCMP1986 / NIES-2087 / MED4).